We begin with the raw amino-acid sequence, 325 residues long: Tetraacyldisaccharide 4'-kinase (325 aa).

An ATP-binding site is contributed by 54–61 (SVGGTGKT).

Belongs to the LpxK family.

The catalysed reaction is a lipid A disaccharide + ATP = a lipid IVA + ADP + H(+). The protein operates within glycolipid biosynthesis; lipid IV(A) biosynthesis; lipid IV(A) from (3R)-3-hydroxytetradecanoyl-[acyl-carrier-protein] and UDP-N-acetyl-alpha-D-glucosamine: step 6/6. In terms of biological role, transfers the gamma-phosphate of ATP to the 4'-position of a tetraacyldisaccharide 1-phosphate intermediate (termed DS-1-P) to form tetraacyldisaccharide 1,4'-bis-phosphate (lipid IVA). This chain is Tetraacyldisaccharide 4'-kinase, found in Rickettsia akari (strain Hartford).